A 463-amino-acid chain; its full sequence is Tryprostatin B synthase (463 aa).

M93 and E101 together coordinate brevianamide F. Dimethylallyl diphosphate contacts are provided by R112, K200, and Y202. A brevianamide F-binding site is contributed by Y204. Dimethylallyl diphosphate is bound by residues K293, Y295, Q379, Y381, Y445, and Y449.

Belongs to the tryptophan dimethylallyltransferase family.

The enzyme catalyses brevianamide F + dimethylallyl diphosphate = tryprostatin B + diphosphate. It functions in the pathway mycotoxin biosynthesis. Functionally, brevianamide F prenyltransferase; part of the gene cluster that mediates the biosynthesis of fumitremorgins, indole alkaloids that carry not only intriguing chemical structures, but also interesting biological and pharmacological activities. The biosynthesis of fumitremorgin-type alkaloids begins by condensation of the two amino acids L-tryptophan and L-proline to brevianamide F, catalyzed by the non-ribosomal peptide synthetase ftmPS/ftmA. Brevianamide F is then prenylated by the prenyltransferase ftmPT1/ftmB in the presence of dimethylallyl diphosphate, resulting in the formation of tryprostatin B. The three cytochrome P450 monooxygenases, ftmP450-1/ftmC, ftmP450-2/ftmE and ftmP450-3/FtmG, are responsible for the conversion of tryprostatin B to 6-hydroxytryprostatin B, tryprostatin A to fumitremorgin C and fumitremorgin C to 12,13-dihydroxyfumitremorgin C, respectively. The putative methyltransferase ftmMT/ftmD is expected for the conversion of 6-hydroxytryprostatin B to tryprostatin A. FtmPT2/FtmH catalyzes the prenylation of 12,13-dihydroxyfumitre-morgin C in the presence of dimethylallyl diphosphate, resulting in the formation of fumitremorgin B. Fumitremorgin B is further converted to verruculogen by ftmOx1/ftmF via the insertion of an endoperoxide bond between the two prenyl moieties. Finally, verruculogen is further converted to fumitremorgin A by the verruculogen prenyltransferase ftmPT3. The sequence is that of Tryprostatin B synthase from Neosartorya fischeri (strain ATCC 1020 / DSM 3700 / CBS 544.65 / FGSC A1164 / JCM 1740 / NRRL 181 / WB 181) (Aspergillus fischerianus).